Here is a 326-residue protein sequence, read N- to C-terminus: Dolichyl-phosphate beta-glucosyltransferase (326 aa).

Over 1 to 7 (MWTCLCQ) the chain is Lumenal. Residues 8-28 (LCFYLLSTLAVAALSIAALVL) form a helical membrane-spanning segment. Topologically, residues 29 to 326 (YKTKPYPNIK…RIASIQKKEK (298 aa)) are cytoplasmic.

The protein belongs to the glycosyltransferase 2 family.

The protein resides in the endoplasmic reticulum membrane. The catalysed reaction is a di-trans,poly-cis-dolichyl phosphate + UDP-alpha-D-glucose = a di-trans,poly-cis-dolichyl beta-D-glucosyl phosphate + UDP. It functions in the pathway protein modification; protein glycosylation. In terms of biological role, required for normal production of N-glycosylated proteins in the endoplasmic reticulum (ER). Required for embryonic segmentation, dorsal-ventral patterning and gastrulation. Required for chitin orientation and shaping of the apical and lateral plasma membranes of epidermal cells during cuticle differentiation. Also required for correctly shaping apical membrane topology of the epithelia of other organs such as the midgut and the hindgut. In Drosophila melanogaster (Fruit fly), this protein is Dolichyl-phosphate beta-glucosyltransferase (wol).